The primary structure comprises 304 residues: Sulfate adenylyltransferase subunit 2 2 (304 aa).

This sequence belongs to the PAPS reductase family. CysD subfamily. As to quaternary structure, heterodimer composed of CysD, the smaller subunit, and CysN.

It carries out the reaction sulfate + ATP + H(+) = adenosine 5'-phosphosulfate + diphosphate. It participates in sulfur metabolism; hydrogen sulfide biosynthesis; sulfite from sulfate: step 1/3. With CysN forms the ATP sulfurylase (ATPS) that catalyzes the adenylation of sulfate producing adenosine 5'-phosphosulfate (APS) and diphosphate, the first enzymatic step in sulfur assimilation pathway. APS synthesis involves the formation of a high-energy phosphoric-sulfuric acid anhydride bond driven by GTP hydrolysis by CysN coupled to ATP hydrolysis by CysD. This is Sulfate adenylyltransferase subunit 2 2 from Marinobacter nauticus (strain ATCC 700491 / DSM 11845 / VT8) (Marinobacter aquaeolei).